We begin with the raw amino-acid sequence, 396 residues long: Subtilisin-like protease 5 (396 aa).

The signal sequence occupies residues 1–20 (MTGFFTILSFSLAALSVTNA). Positions 21–116 (AQILSVPKGA…VEPDAIISQH (96 aa)) are excised as a propeptide. Positions 37–113 (YIVVMKDDTS…VAFVEPDAII (77 aa)) constitute an Inhibitor I9 domain. Asparagine 63 is a glycosylation site (N-linked (GlcNAc...) asparagine). The Peptidase S8 domain maps to 125–396 (PWGLSRLSNR…SRLLYNGSGR (272 aa)). Catalysis depends on charge relay system residues aspartate 156 and histidine 187. N-linked (GlcNAc...) asparagine glycosylation is found at asparagine 230 and asparagine 248. The active-site Charge relay system is serine 342. A compositionally biased stretch (polar residues) spans 376–389 (PTIRNPGPDTTSRL). A disordered region spans residues 376 to 396 (PTIRNPGPDTTSRLLYNGSGR). An N-linked (GlcNAc...) asparagine glycan is attached at asparagine 392.

The protein belongs to the peptidase S8 family.

It is found in the secreted. Its function is as follows. Secreted subtilisin-like serine protease with keratinolytic activity that contributes to pathogenicity. The polypeptide is Subtilisin-like protease 5 (SUB5) (Trichophyton verrucosum (Cattle ringworm fungus)).